A 616-amino-acid polypeptide reads, in one-letter code: Auxin efflux carrier component 4 (616 aa).

Over 1–7 the chain is Extracellular; the sequence is MITWHDL. A helical transmembrane segment spans residues 8–28; that stretch reads YTVLTAVVPLYVAMILAYGSV. The Cytoplasmic portion of the chain corresponds to 29-38; the sequence is QWWKIFSPDQ. A helical membrane pass occupies residues 39 to 59; sequence CSGINRFVAIFAVPLLSFHFI. A (indol-3-yl)acetate-binding site is contributed by Val-51. Over 60-70 the chain is Extracellular; it reads STNDPYAMNFR. Residues 71–91 form a helical membrane-spanning segment; the sequence is FVAADTLQKIIMLVLLALWAN. Topologically, residues 92–101 are cytoplasmic; the sequence is LTKNGSLEWM. The helical transmembrane segment at 102–122 threads the bilayer; that stretch reads ITIFSLSTLPNTLVMGIPLLI. The (indol-3-yl)acetate site is built by Asn-112 and Leu-114. Residues 123–131 are Extracellular-facing; the sequence is AMYGTYAGS. A helical transmembrane segment spans residues 132 to 152; the sequence is LMVQVVVLQCIIWYTLLLFLF. Tyr-145 is a binding site for (indol-3-yl)acetate. Topologically, residues 153 to 476 are cytoplasmic; that stretch reads EYRGAKLLIM…LIRNPNTYSS (324 aa). Phosphoserine is present on residues Ser-223, Ser-240, and Ser-280. The interval 302–343 is disordered; that stretch reads AAGSYPAPNPEFSTGTGVSTKPNKIPKENQQQLQEKDSKASH. Positions 312 to 334 are enriched in polar residues; that stretch reads EFSTGTGVSTKPNKIPKENQQQL. Ser-358 and Ser-395 each carry phosphoserine. The tract at residues 390 to 411 is disordered; sequence DQPRKSNARGGGDDIGGLDSGE. A compositionally biased stretch (gly residues) spans 398–409; that stretch reads RGGGDDIGGLDS. Residues 477–497 form a helical membrane-spanning segment; the sequence is LIGLIWALVAYRWHVAMPKIL. Residues 498–500 lie on the Extracellular side of the membrane; sequence QQS. A helical membrane pass occupies residues 501 to 521; sequence ISILSDAGLGMAMFSLGLFMA. At 522–535 the chain is on the cytoplasmic side; it reads LQPKIIACGNSVAT. Residues 536 to 556 traverse the membrane as a helical segment; that stretch reads FAMAVRFITGPAIMAVAGIAI. The Extracellular portion of the chain corresponds to 557–561; that stretch reads GLHGD. A helical membrane pass occupies residues 562–582; sequence LLRIAIVQAALPQGIVPFVFA. Positions 576 and 577 each coordinate (indol-3-yl)acetate. Residues 583 to 595 lie on the Cytoplasmic side of the membrane; it reads KEYNVHPTILSTG. The chain crosses the membrane as a helical span at residues 596–616; that stretch reads VIFGMLIALPITLVYYILLGL.

It belongs to the auxin efflux carrier (TC 2.A.69.1) family. In terms of assembly, homodimer. Expressed in the quiescent center precursors and surrounding cells. Present in columella cells of primary roots. Detected in pollen.

The protein localises to the cell membrane. Acts as a component of the auxin efflux carrier. Plays a role in generating a sink for auxin into columella cells. Maintains the endogenous auxin gradient, which is essential for correct root patterning. Involved in EXO70A3-regulated gravitropic responses in columella cells and in root system architecture (RSA). Together with PIN3 and PIN7, involved in the connective auxin transport (CAT) that ensures communication across the shoot system, and modulates strigolactone-mediated shoot branching control. The abcb19 pin3 pin4 pin7 quadruple mutant exhibits an additive phenotype on strigolactone-mediated bud outgrowth responses and shoot branching control. The chain is Auxin efflux carrier component 4 from Arabidopsis thaliana (Mouse-ear cress).